We begin with the raw amino-acid sequence, 362 residues long: Meiotic recombination protein SPO11-1 (362 aa).

The 135-residue stretch at 8 to 142 (SESTNLLQRI…LNVVSVGNGL (135 aa)) folds into the Topo IIA-type catalytic domain. Tyrosine 103 (O-(5'-phospho-DNA)-tyrosine intermediate) is an active-site residue. Mg(2+) is bound by residues glutamate 189 and aspartate 241.

This sequence belongs to the TOP6A family. Heterotetramer of 2 SPO11 (SPO11-1 and/or SPO11-2) and 2 MTOPVIB chains. Interacts with MTOPVIB. May form a heterodimer with SPO11-2. Interacts with PRD1. Does not interact with TOP6B. Mg(2+) serves as cofactor. Expressed in shoots, young seedlings, flowers and reproductive tissues. Not found in roots or rosette leaves.

It is found in the nucleus. It catalyses the reaction ATP-dependent breakage, passage and rejoining of double-stranded DNA.. Component of a topoisomerase 6 complex specifically required for meiotic recombination. Together with MTOPVIB, mediates DNA cleavage that forms the double-strand breaks (DSB) that initiate meiotic recombination. The complex promotes relaxation of negative and positive supercoiled DNA and DNA decatenation through cleavage and ligation cycles. The protein is Meiotic recombination protein SPO11-1 of Arabidopsis thaliana (Mouse-ear cress).